Reading from the N-terminus, the 341-residue chain is Guanine nucleotide-binding protein subunit beta (341 aa).

WD repeat units lie at residues 54–93 (GHLA…KVHA), 96–135 (LRSS…GNVR), 142–180 (GHTG…QTTA), 183–222 (GHTG…CKQT), 225–264 (GHES…EIGM), 269–308 (NIIC…RAGV), and 311–341 (GHDN…RIWN).

The protein belongs to the WD repeat G protein beta family. As to quaternary structure, g proteins are composed of 3 units, alpha, beta and gamma. The G protein beta1-gamma2 dimer interacts with calmodulin. Abundantly expressed in gills, gonad and mantle and at lower levels in digestion gland. Not detected in muscle.

The protein localises to the cytoplasm. Guanine nucleotide-binding proteins (G proteins) are involved as a modulator or transducer in various transmembrane signaling systems. The beta and gamma chains are required for the GTPase activity, for replacement of GDP by GTP, and for G protein-effector interaction. The chain is Guanine nucleotide-binding protein subunit beta from Pinctada fucata (Akoya pearl oyster).